We begin with the raw amino-acid sequence, 1081 residues long: FHIP family protein GA25918 (1081 aa).

Residues 1–11 are compositionally biased toward polar residues; that stretch reads MSWLRSSPLRQ. Disordered regions lie at residues 1–31, 504–524, 650–685, 830–913, and 933–1027; these read MSWLRSSPLRQSGNGGGGGVSTGHSSTGSLR, ARPKSVHEQQAPSGATGEQPI, ADEESDATDLTVTTTTASEADLEHNSSSVSSGMGGG, NENS…AASS, and NNNN…SEPA. Serine 508 carries the post-translational modification Phosphoserine. Residues 657-668 are compositionally biased toward low complexity; it reads TDLTVTTTTASE. The residue at position 833 (serine 833) is a Phosphoserine. Positions 840-856 are enriched in low complexity; that stretch reads QPQTTLSQQQQQQQGQQ. The segment covering 857 to 876 has biased composition (polar residues); that stretch reads RSAYATLSAATPVQATQTSA. 2 stretches are compositionally biased toward low complexity: residues 891-913 and 933-953; these read SKSISSMFSRRSTPNPPSSAASS and NNNNSGSGGQSQPFSSTGTGT. Residues 954 to 963 show a composition bias toward polar residues; the sequence is CETSLSTNPQ. Over residues 964-993 the composition is skewed to low complexity; it reads SGAAAARSTGTATTANGNSSNSNISIGGST. A compositionally biased stretch (polar residues) spans 994–1010; that stretch reads QTLSGHSNTTTYSSSTL.

It belongs to the FHIP family.

The polypeptide is FHIP family protein GA25918 (Drosophila pseudoobscura pseudoobscura (Fruit fly)).